The sequence spans 349 residues: uncharacterized protein (349 aa).

Residues 51–160 (NIIKENKNNL…QDESYISIFQ (110 aa)) form the THUMP domain.

This is an uncharacterized protein from Methanocaldococcus jannaschii (strain ATCC 43067 / DSM 2661 / JAL-1 / JCM 10045 / NBRC 100440) (Methanococcus jannaschii).